The chain runs to 98 residues: DNA-binding protein Fis (98 aa).

Positions glutamine 74–lysine 93 form a DNA-binding region, H-T-H motif.

Belongs to the transcriptional regulatory Fis family. Homodimer.

Functionally, activates ribosomal RNA transcription. Plays a direct role in upstream activation of rRNA promoters. This Vibrio atlanticus (strain LGP32) (Vibrio splendidus (strain Mel32)) protein is DNA-binding protein Fis.